A 435-amino-acid chain; its full sequence is UPF0053 protein Rv2366c (435 aa).

A CNNM transmembrane domain is found at 1–185 (MTGYYQLLGS…QQRGVVAADE (185 aa)). Transmembrane regions (helical) follow at residues 7-27 (LLGS…DAAI) and 89-109 (VWGL…VVGV). CBS domains are found at residues 204–267 (MVPR…GRET) and 272–329 (VMRP…IADE).

It belongs to the UPF0053 family.

It is found in the cell membrane. This is UPF0053 protein Rv2366c from Mycobacterium tuberculosis (strain ATCC 25618 / H37Rv).